We begin with the raw amino-acid sequence, 108 residues long: Nucleoid-associated protein BMASAVP1_A1850 (108 aa).

The tract at residues 84–108 (EATSQEKMSGMTSGLPLPPGFKLPF) is disordered. The span at 85–95 (ATSQEKMSGMT) shows a compositional bias: polar residues. The span at 99–108 (PLPPGFKLPF) shows a compositional bias: pro residues.

The protein belongs to the YbaB/EbfC family. As to quaternary structure, homodimer.

It is found in the cytoplasm. The protein resides in the nucleoid. In terms of biological role, binds to DNA and alters its conformation. May be involved in regulation of gene expression, nucleoid organization and DNA protection. The polypeptide is Nucleoid-associated protein BMASAVP1_A1850 (Burkholderia mallei (strain SAVP1)).